The following is a 1485-amino-acid chain: Formin BNR1 (1485 aa).

3 disordered regions span residues histidine 65–histidine 88, histidine 226–threonine 248, and alanine 549–glutamate 575. The GBD/FH3 domain occupies asparagine 110 to glycine 636. The segment covering threonine 231–threonine 248 has biased composition (polar residues). Positions leucine 553 to aspartate 564 are enriched in acidic residues. Residues alanine 660 to alanine 734 adopt a coiled-coil conformation. Positions glycine 746 to proline 874 are disordered. The FH2 domain maps to valine 953 to aspartate 1368. Coiled coils occupy residues histidine 1240–asparagine 1312 and glutamine 1351–glutamate 1382. The interval leucine 1447 to serine 1471 is disordered.

It belongs to the formin homology family. BNI1 subfamily. Interacts with IQG1.

It is found in the bud neck. Its subcellular location is the cell septum. May organize microtubules by mediating spindle positioning and movement in the budding process. Required for cytokinesis and the maintenance of polarized hyphal growth. This Candida albicans (strain SC5314 / ATCC MYA-2876) (Yeast) protein is Formin BNR1 (BNR1).